The primary structure comprises 41 residues: Histone H2B.3, sperm (41 aa).

The disordered stretch occupies residues 1 to 41 (MPRSPSKSSPKKGSPRKASPKRGGKGAKRAGKGGRRRTVVK). Short sequence motifs (SPKK motif) lie at residues 4 to 7 (SPSK), 9 to 12 (SPKK), 14 to 17 (SPRK), and 19 to 22 (SPKR). A compositionally biased stretch (basic residues) spans 9–41 (SPKKGSPRKASPKRGGKGAKRAGKGGRRRTVVK). S14 and S19 each carry phosphoserine.

This sequence belongs to the histone H2B family. The nucleosome is a histone octamer containing two molecules each of H2A, H2B, H3 and H4 assembled in one H3-H4 heterotetramer and two H2A-H2B heterodimers. The octamer wraps approximately 147 bp of DNA. Monoubiquitination gives a specific tag for epigenetic transcriptional activation and is also prerequisite for histone H3 'Lys-4' and 'Lys-79' methylation. Post-translationally, phosphorylated on SPKK motifs 3 and 4; which may regulate DNA binding. Dephosphorylated during maturation of spermatids to mature sperm and rephosphorylated at fertilization.

Its subcellular location is the nucleus. The protein localises to the chromosome. Core component of nucleosome. Nucleosomes wrap and compact DNA into chromatin, limiting DNA accessibility to the cellular machineries which require DNA as a template. Histones thereby play a central role in transcription regulation, DNA repair, DNA replication and chromosomal stability. DNA accessibility is regulated via a complex set of post-translational modifications of histones, also called histone code, and nucleosome remodeling. The protein is Histone H2B.3, sperm of Echinus esculentus (Sea urchin).